A 907-amino-acid polypeptide reads, in one-letter code: DNA ligase 4 (907 aa).

Glu-273, Lys-275, Arg-280, Glu-333, Phe-378, Glu-438, Lys-443, Lys-460, and Lys-462 together coordinate ATP. Lys-275 acts as the N6-AMP-lysine intermediate in catalysis. Glu-333 is a Mg(2+) binding site. Glu-438 provides a ligand contact to Mg(2+). BRCT domains follow at residues 655–754 (PVSN…ESDI) and 800–906 (VPLF…HYQC).

Belongs to the ATP-dependent DNA ligase family. The cofactor is Mg(2+).

It localises to the nucleus. The enzyme catalyses ATP + (deoxyribonucleotide)n-3'-hydroxyl + 5'-phospho-(deoxyribonucleotide)m = (deoxyribonucleotide)n+m + AMP + diphosphate.. In terms of biological role, DNA ligase involved in DNA non-homologous end joining (NHEJ); required for double-strand break (DSB) repair. This is DNA ligase 4 (LIG4) from Kluyveromyces lactis (strain ATCC 8585 / CBS 2359 / DSM 70799 / NBRC 1267 / NRRL Y-1140 / WM37) (Yeast).